A 669-amino-acid polypeptide reads, in one-letter code: UvrABC system protein B (669 aa).

The region spanning 26–183 (TNFHAGIAKQ…RHLTELQYTR (158 aa)) is the Helicase ATP-binding domain. 39–46 (GVTGSGKT) provides a ligand contact to ATP. The short motif at 92–115 (YYDYYQPEAYVPASDTFIEKDSSI) is the Beta-hairpin element. One can recognise a Helicase C-terminal domain in the interval 431–597 (QVDDLISQIN…SVVRPISDIL (167 aa)). The UVR domain maps to 631-666 (AAQMKVLEQKMYQHARDLEFEDAARIRDQIQRLREA).

It belongs to the UvrB family. In terms of assembly, forms a heterotetramer with UvrA during the search for lesions. Interacts with UvrC in an incision complex.

The protein localises to the cytoplasm. Its function is as follows. The UvrABC repair system catalyzes the recognition and processing of DNA lesions. A damage recognition complex composed of 2 UvrA and 2 UvrB subunits scans DNA for abnormalities. Upon binding of the UvrA(2)B(2) complex to a putative damaged site, the DNA wraps around one UvrB monomer. DNA wrap is dependent on ATP binding by UvrB and probably causes local melting of the DNA helix, facilitating insertion of UvrB beta-hairpin between the DNA strands. Then UvrB probes one DNA strand for the presence of a lesion. If a lesion is found the UvrA subunits dissociate and the UvrB-DNA preincision complex is formed. This complex is subsequently bound by UvrC and the second UvrB is released. If no lesion is found, the DNA wraps around the other UvrB subunit that will check the other stand for damage. The polypeptide is UvrABC system protein B (Xylella fastidiosa (strain M23)).